The following is a 279-amino-acid chain: MPSRIDATFARARAENRSVLVTYVMSGDPDPETSLEVLKALPGAGADILEFGLPFTDPMADGPAIQAAGLRALKAGQTVSGTLDLVRRFRAGNDTTPVVLMGYYNPIHTYGVDRFLDDAVAAGVDGLIVVDLPPEEDAELCLPALGKGLAFIRLATPTTDERRLPAVLANTAGFVYYVSITGITGTATPDFGKVSEAVARIRRHTDLPVVVGFGVKTGAHAAAIAKGADGVVVGSALVDALVRSLDGEGRPQAGSVGAVTELVRELAAGVRSAGVGRAA.

Residues E50 and D61 each act as proton acceptor in the active site.

The protein belongs to the TrpA family. As to quaternary structure, tetramer of two alpha and two beta chains.

The enzyme catalyses (1S,2R)-1-C-(indol-3-yl)glycerol 3-phosphate + L-serine = D-glyceraldehyde 3-phosphate + L-tryptophan + H2O. It functions in the pathway amino-acid biosynthesis; L-tryptophan biosynthesis; L-tryptophan from chorismate: step 5/5. Functionally, the alpha subunit is responsible for the aldol cleavage of indoleglycerol phosphate to indole and glyceraldehyde 3-phosphate. This chain is Tryptophan synthase alpha chain, found in Methylobacterium radiotolerans (strain ATCC 27329 / DSM 1819 / JCM 2831 / NBRC 15690 / NCIMB 10815 / 0-1).